The chain runs to 171 residues: MAEKRNIFLVGPMGAGKSTIGRHLAQLLHLEFHDSDHEIEQRTGADIAWVFDVEGEEGFRRREAQVIADLSEKQGIVLATGGGSVQSKDIRNHLSARGIVVYLETTIDKQVARTQRDKRRPLLQVDDPREVLENLAETRNPLYEEIADVIVKTDEQSAKIVANQIIEQLGF.

Position 14–19 (14–19 (GAGKST)) interacts with ATP. Ser18 contributes to the Mg(2+) binding site. Asp36, Arg60, and Gly82 together coordinate substrate. Arg120 is a binding site for ATP. Arg139 provides a ligand contact to substrate. Gln156 lines the ATP pocket.

Belongs to the shikimate kinase family. As to quaternary structure, monomer. It depends on Mg(2+) as a cofactor.

It localises to the cytoplasm. The enzyme catalyses shikimate + ATP = 3-phosphoshikimate + ADP + H(+). It functions in the pathway metabolic intermediate biosynthesis; chorismate biosynthesis; chorismate from D-erythrose 4-phosphate and phosphoenolpyruvate: step 5/7. Catalyzes the specific phosphorylation of the 3-hydroxyl group of shikimic acid using ATP as a cosubstrate. The protein is Shikimate kinase of Shewanella denitrificans (strain OS217 / ATCC BAA-1090 / DSM 15013).